A 310-amino-acid chain; its full sequence is 26S proteasome non-ATPase regulatory subunit 7 homolog B (310 aa).

Residue methionine 1 is modified to N-acetylmethionine. An MPN domain is found at 17-154; it reads VIVHPLVLLS…YYAVEEVKEN (138 aa).

Belongs to the peptidase M67A family. As to quaternary structure, component of the 19S regulatory particle (RP/PA700) lid subcomplex of the 26S proteasome. The 26S proteasome is composed of a core protease (CP), known as the 20S proteasome, capped at one or both ends by the 19S regulatory particle (RP/PA700). The RP/PA700 complex is composed of at least 17 different subunits in two subcomplexes, the base and the lid, which form the portions proximal and distal to the 20S proteolytic core, respectively.

In terms of biological role, acts as a regulatory subunit of the 26S proteasome which is involved in the ATP-dependent degradation of ubiquitinated proteins. This chain is 26S proteasome non-ATPase regulatory subunit 7 homolog B (RPN8B), found in Arabidopsis thaliana (Mouse-ear cress).